The sequence spans 328 residues: Malate dehydrogenase (328 aa).

12-18 contacts NAD(+); the sequence is GAAGQIG. Positions 95 and 101 each coordinate substrate. NAD(+) is bound by residues Asn108, Gln115, and 132–134; that span reads VGN. Substrate is bound by residues Asn134 and Arg165. The active-site Proton acceptor is the His190.

It belongs to the LDH/MDH superfamily. MDH type 2 family.

It catalyses the reaction (S)-malate + NAD(+) = oxaloacetate + NADH + H(+). Its function is as follows. Catalyzes the reversible oxidation of malate to oxaloacetate. The sequence is that of Malate dehydrogenase from Acidovorax ebreus (strain TPSY) (Diaphorobacter sp. (strain TPSY)).